The primary structure comprises 124 residues: MFQVIQKELDFGNAMIPKVWIQVIKLNPSSSIFVWGSNVSTCPAGDLALSMPGKSDVVTTKLTGAGSIDDLSTQMSRILSKKFQAQVYTSINLQGDFPNDPEVQSVFTQVIRAVIEIIESSKSS.

Its subcellular location is the cytoplasm. It localises to the nucleus. This is an uncharacterized protein from Schizosaccharomyces pombe (strain 972 / ATCC 24843) (Fission yeast).